Reading from the N-terminus, the 548-residue chain is Protoporphyrinogen oxidase, chloroplastic (548 aa).

The transit peptide at 1 to 50 directs the protein to the chloroplast; it reads MTTTPIANHPNIFTHQSSSSPLAFLNRTSFIPFSSISKRNSVNCNGWRTR. FAD is bound by residues 78 to 83, 101 to 102, and 123 to 126; these read GAGISG, EA, and GPNS. The span at 265-279 shows a compositional bias: basic and acidic residues; sequence KERSSTPKAPRDPRL. The tract at residues 265–287 is disordered; that stretch reads KERSSTPKAPRDPRLPKPKGQTV. Residue 522 to 524 participates in FAD binding; it reads VAL.

It belongs to the protoporphyrinogen/coproporphyrinogen oxidase family. Protoporphyrinogen oxidase subfamily. As to quaternary structure, homodimer. FAD is required as a cofactor.

The protein localises to the plastid. The protein resides in the chloroplast. It carries out the reaction protoporphyrinogen IX + 3 O2 = protoporphyrin IX + 3 H2O2. It functions in the pathway porphyrin-containing compound metabolism; protoporphyrin-IX biosynthesis; protoporphyrin-IX from protoporphyrinogen-IX: step 1/1. The protein operates within porphyrin-containing compound metabolism; chlorophyll biosynthesis. Catalyzes the 6-electron oxidation of protoporphyrinogen-IX to form protoporphyrin-IX. The sequence is that of Protoporphyrinogen oxidase, chloroplastic (PPXI) from Nicotiana tabacum (Common tobacco).